A 440-amino-acid chain; its full sequence is Alpha-methylserine aldolase (440 aa).

An N6-(pyridoxal phosphate)lysine modification is found at Lys255.

It belongs to the SHMT family. Alpha-methylserine aldolase subfamily. Homodimer. It depends on pyridoxal 5'-phosphate as a cofactor.

It catalyses the reaction 2-methyl-L-serine = formaldehyde + L-alanine. In terms of biological role, catalyzes the reversible interconversion of alpha-methyl-L-serine to L-alanine and formaldehyde. The chain is Alpha-methylserine aldolase from Variovorax paradoxus.